The chain runs to 161 residues: Allophycocyanin alpha chain (161 aa).

Asn71 bears the N4-methylasparagine mark. Cys81 is a (2R,3E)-phycocyanobilin binding site.

It belongs to the phycobiliprotein family. Heterodimer of an alpha and a beta chain. Post-translationally, contains one covalently linked phycocyanobilin chromophore.

The protein localises to the plastid. It is found in the chloroplast thylakoid membrane. Functionally, light-harvesting photosynthetic bile pigment-protein from the phycobiliprotein complex. Allophycocyanin has a maximum absorption at approximately 650 nanometers. In Aglaothamnion neglectum (Red alga), this protein is Allophycocyanin alpha chain (apcA).